We begin with the raw amino-acid sequence, 209 residues long: HTH-type transcriptional repressor BepR (209 aa).

Residues 9-69 (AETREAILLA…SIIGRARFPQ (61 aa)) enclose the HTH tetR-type domain. Positions 32-51 (TLTEIACYAGVTRGAIYFHF) form a DNA-binding region, H-T-H motif.

In terms of biological role, represses expression of bepDE. The sequence is that of HTH-type transcriptional repressor BepR (bepR) from Brucella suis biovar 1 (strain 1330).